The sequence spans 524 residues: GMP synthase [glutamine-hydrolyzing] (524 aa).

Residues 12–201 enclose the Glutamine amidotransferase type-1 domain; sequence TILVLDFGSQ…AVDICKASQS (190 aa). The active-site Nucleophile is cysteine 88. Residues histidine 175 and glutamate 177 contribute to the active site. Positions 202-399 constitute a GMPS ATP-PPase domain; the sequence is WNMENFIDTE…LGISHELVWR (198 aa). 230-236 is a binding site for ATP; it reads SGGVDST. Residues arginine 303, aspartate 461, lysine 516, and glutamate 522 each coordinate XMP.

In terms of assembly, homodimer. It depends on Mg(2+) as a cofactor.

The protein resides in the cytoplasm. It is found in the cytosol. The enzyme catalyses XMP + L-glutamine + ATP + H2O = GMP + L-glutamate + AMP + diphosphate + 2 H(+). It participates in purine metabolism; GMP biosynthesis; GMP from XMP (L-Gln route): step 1/1. In terms of biological role, catalyzes the conversion of xanthine monophosphate (XMP) to GMP in the presence of glutamine and ATP through an adenyl-XMP intermediate. This Kluyveromyces lactis (strain ATCC 8585 / CBS 2359 / DSM 70799 / NBRC 1267 / NRRL Y-1140 / WM37) (Yeast) protein is GMP synthase [glutamine-hydrolyzing] (GUA1).